The following is a 366-amino-acid chain: Histidinol-phosphate aminotransferase (366 aa).

Lys-222 is subject to N6-(pyridoxal phosphate)lysine.

This sequence belongs to the class-II pyridoxal-phosphate-dependent aminotransferase family. Histidinol-phosphate aminotransferase subfamily. Homodimer. Pyridoxal 5'-phosphate serves as cofactor.

The enzyme catalyses L-histidinol phosphate + 2-oxoglutarate = 3-(imidazol-4-yl)-2-oxopropyl phosphate + L-glutamate. The protein operates within amino-acid biosynthesis; L-histidine biosynthesis; L-histidine from 5-phospho-alpha-D-ribose 1-diphosphate: step 7/9. In Lysinibacillus sphaericus (strain C3-41), this protein is Histidinol-phosphate aminotransferase.